The primary structure comprises 433 residues: MLDIQLLRKDLDGVAKRLADRGYTLDVAAFSALEAERRAIQTHTEELQARRNSLSKQIGAMKGKGEDTSAVMAEVSGIGDDMKASEAKLGEIQARLSDLMLGMPNVAHESVPVGKDEADNVEVRRWGTPRQFDFEVKDHVDVGTPLGLDFETGAKLAGARFTMLRGPIARLHRALAQFMIDTHTQQHGYTETYTPYIVNPEILYGTGQLPKFADDMFRVEKGGAENTVTQYLISTSEISLTNTVRESIVDGAALPIKLTAHSPCFRSEAGSYGRDTRGMIRQHQFDKVEMVQVVAPETSYAALDEMVGHAEAILQKLGLPYRVITLCTGDMGFSAAKTFDLEVWLPAQNTYREISSCSNTEAFQARRMQARFRNAQGKPELVHTLNGSGLAVGRTLVAVLENYQNADGSVTVPEVLRPYMGGMERIDAPAQTS.

235-237 (TSE) serves as a coordination point for L-serine. 266–268 (RSE) serves as a coordination point for ATP. An L-serine-binding site is contributed by Glu289. An ATP-binding site is contributed by 353–356 (EISS). Ser388 contributes to the L-serine binding site.

The protein belongs to the class-II aminoacyl-tRNA synthetase family. Type-1 seryl-tRNA synthetase subfamily. As to quaternary structure, homodimer. The tRNA molecule binds across the dimer.

It is found in the cytoplasm. It carries out the reaction tRNA(Ser) + L-serine + ATP = L-seryl-tRNA(Ser) + AMP + diphosphate + H(+). It catalyses the reaction tRNA(Sec) + L-serine + ATP = L-seryl-tRNA(Sec) + AMP + diphosphate + H(+). It participates in aminoacyl-tRNA biosynthesis; selenocysteinyl-tRNA(Sec) biosynthesis; L-seryl-tRNA(Sec) from L-serine and tRNA(Sec): step 1/1. Its function is as follows. Catalyzes the attachment of serine to tRNA(Ser). Is also able to aminoacylate tRNA(Sec) with serine, to form the misacylated tRNA L-seryl-tRNA(Sec), which will be further converted into selenocysteinyl-tRNA(Sec). In Burkholderia cenocepacia (strain ATCC BAA-245 / DSM 16553 / LMG 16656 / NCTC 13227 / J2315 / CF5610) (Burkholderia cepacia (strain J2315)), this protein is Serine--tRNA ligase.